Consider the following 174-residue polypeptide: Co-chaperone protein HscB homolog (174 aa).

In terms of domain architecture, J spans 2–74 (NYFELFKFPP…IRRAEHMLSL (73 aa)).

It belongs to the HscB family. Interacts with HscA and stimulates its ATPase activity.

Co-chaperone involved in the maturation of iron-sulfur cluster-containing proteins. Seems to help targeting proteins to be folded toward HscA. The chain is Co-chaperone protein HscB homolog from Shewanella oneidensis (strain ATCC 700550 / JCM 31522 / CIP 106686 / LMG 19005 / NCIMB 14063 / MR-1).